Here is a 452-residue protein sequence, read N- to C-terminus: Ribosomal protein uS12 methylthiotransferase RimO (452 aa).

Residues 8 to 123 (PRVGFVSLGC…VMQAVHTHLP (116 aa)) enclose the MTTase N-terminal domain. Residues C17, C53, C82, C154, C158, and C161 each contribute to the [4Fe-4S] cluster site. A Radical SAM core domain is found at 140–381 (LTPKHYAYLK…MEVAEEVSAR (242 aa)). Residues 384-452 (QRKVGQTLRV…ADGHDLWGEI (69 aa)) enclose the TRAM domain.

The protein belongs to the methylthiotransferase family. RimO subfamily. Requires [4Fe-4S] cluster as cofactor.

Its subcellular location is the cytoplasm. The catalysed reaction is L-aspartate(89)-[ribosomal protein uS12]-hydrogen + (sulfur carrier)-SH + AH2 + 2 S-adenosyl-L-methionine = 3-methylsulfanyl-L-aspartate(89)-[ribosomal protein uS12]-hydrogen + (sulfur carrier)-H + 5'-deoxyadenosine + L-methionine + A + S-adenosyl-L-homocysteine + 2 H(+). Catalyzes the methylthiolation of an aspartic acid residue of ribosomal protein uS12. This chain is Ribosomal protein uS12 methylthiotransferase RimO, found in Cupriavidus pinatubonensis (strain JMP 134 / LMG 1197) (Cupriavidus necator (strain JMP 134)).